A 209-amino-acid polypeptide reads, in one-letter code: MNKTNQLINICILVTLFLIGSSSALTLQVEPKSQECFYNFIESGKTSLLLYQVIRGGLLDINVKLTDPKGNTIFERLHFDTQMKGKQSFTAGESGAYKVCFNNEMSRFTAKVVTFTWASEEEGVKEVAKGDSITPMDQSVQKIERVLQSVIHEQKKLRYREQANRDTSESTNARVVWWTIAEVIVLVVMGVGQIWYLRKWFDNKSTGRV.

The N-terminal stretch at 1–24 (MNKTNQLINICILVTLFLIGSSSA) is a signal peptide. Topologically, residues 25–174 (LTLQVEPKSQ…RDTSESTNAR (150 aa)) are lumenal. The GOLD domain occupies 34 to 119 (QECFYNFIES…AKVVTFTWAS (86 aa)). The helical transmembrane segment at 175–195 (VVWWTIAEVIVLVVMGVGQIW) threads the bilayer. Residues 196-209 (YLRKWFDNKSTGRV) lie on the Cytoplasmic side of the membrane.

Belongs to the EMP24/GP25L family.

The protein resides in the cytoplasmic vesicle membrane. Could have a role in the budding of coatomer-coated and other species of coated vesicles. The polypeptide is Transmembrane emp24 domain-containing protein B (empB) (Dictyostelium discoideum (Social amoeba)).